Consider the following 338-residue polypeptide: Ferredoxin--NADP reductase (338 aa).

FAD contacts are provided by D35, Q43, Y48, A88, F122, D289, and T330.

Belongs to the ferredoxin--NADP reductase type 2 family. As to quaternary structure, homodimer. FAD is required as a cofactor.

The enzyme catalyses 2 reduced [2Fe-2S]-[ferredoxin] + NADP(+) + H(+) = 2 oxidized [2Fe-2S]-[ferredoxin] + NADPH. This chain is Ferredoxin--NADP reductase, found in Ehrlichia chaffeensis (strain ATCC CRL-10679 / Arkansas).